Consider the following 348-residue polypeptide: Flavonol synthase/flavanone 3-hydroxylase (348 aa).

One can recognise a Fe2OG dioxygenase domain in the interval 209–309 (EIVYLLKINY…RMSWPVFLEP (101 aa)). Residues H234, D236, and H290 each coordinate Fe cation.

This sequence belongs to the iron/ascorbate-dependent oxidoreductase family. L-ascorbate serves as cofactor. The cofactor is Fe cation.

It is found in the cytoplasm. It carries out the reaction a (2R,3R)-dihydroflavonol + 2-oxoglutarate + O2 = a flavonol + succinate + CO2 + H2O. The enzyme catalyses a (2S)-flavan-4-one + 2-oxoglutarate + O2 = a (2R,3R)-dihydroflavonol + succinate + CO2. It participates in secondary metabolite biosynthesis; flavonoid biosynthesis. Its function is as follows. Catalyzes the formation of flavonols from dihydroflavonols. It can act on dihydrokaempferol to produce kaempferol, on dihydroquercetin to produce quercitin and on dihydromyricetin to produce myricetin. The protein is Flavonol synthase/flavanone 3-hydroxylase (FL) of Petunia hybrida (Petunia).